The sequence spans 298 residues: MAHPEQQYLDLLAQTLERGDRRVDRTGVGTLSLFGAMLRFDLSGGQVPILTTKRVYWKTAVKEMLWFLTGGTNIRPLLQENVRIWSDWPLAAYRRESGEEISQAAFEQRVLEDEAFAARWGELGPVYGKQWRRWLGPDGHEHDQIAALIETLRTNPSSRRMLFHAWNVAEVGQMALPPCHMVYQYHVTSDGRLNALLYQRSVDLLLGAPFNFVGAAALQLMIAQQAGLVPGDLVWVGGDTHLYLNHLDQAREQTGRAPRDWPRMRLLRRADSIDDYRIEDFAVEGYDPHPAIAAEVAV.

Residues Arg-25 and 159-160 contribute to the dUMP site; that span reads RR. The Nucleophile role is filled by Cys-179. Residues 200–203, Asn-211, and 241–243 contribute to the dUMP site; these read RSVD and HLY. (6R)-5,10-methylene-5,6,7,8-tetrahydrofolate is bound at residue Asp-203. Ala-297 contributes to the (6R)-5,10-methylene-5,6,7,8-tetrahydrofolate binding site.

Belongs to the thymidylate synthase family. Bacterial-type ThyA subfamily. As to quaternary structure, homodimer.

The protein resides in the cytoplasm. The enzyme catalyses dUMP + (6R)-5,10-methylene-5,6,7,8-tetrahydrofolate = 7,8-dihydrofolate + dTMP. Its pathway is pyrimidine metabolism; dTTP biosynthesis. Its function is as follows. Catalyzes the reductive methylation of 2'-deoxyuridine-5'-monophosphate (dUMP) to 2'-deoxythymidine-5'-monophosphate (dTMP) while utilizing 5,10-methylenetetrahydrofolate (mTHF) as the methyl donor and reductant in the reaction, yielding dihydrofolate (DHF) as a by-product. This enzymatic reaction provides an intracellular de novo source of dTMP, an essential precursor for DNA biosynthesis. This Cereibacter sphaeroides (strain ATCC 17023 / DSM 158 / JCM 6121 / CCUG 31486 / LMG 2827 / NBRC 12203 / NCIMB 8253 / ATH 2.4.1.) (Rhodobacter sphaeroides) protein is Thymidylate synthase.